Here is a 55-residue protein sequence, read N- to C-terminus: MNNSLFDLNLNKGVETQKSDLSPQSASVLKTSIKVSKKYCKGVTLTCGCNITGGK.

A propeptide spans 1–24 (cleaved by ElxP); sequence MNNSLFDLNLNKGVETQKSDLSPQ. Residue Ser25 is modified to D-lactate; by the dehydratase ElxB and the dehydrogenase ElxO. Ser27 bears the 2,3-didehydroalanine (Ser); by the dehydratase ElxB mark. A 2,3-didehydrobutyrine; by the dehydratase ElxB modification is found at Thr31. Ser32 is subject to 2,3-didehydroalanine (Ser); by the dehydratase ElxB. A cross-link (lanthionine (Ser-Cys); by the dehydratase ElxB and the cyclase ElxC) is located at residues 36–40; that stretch reads SKKYC. 2 cross-links (beta-methyllanthionine (Thr-Cys); by the dehydratase ElxB and the cyclase ElxC) span residues 44 to 47 and 46 to 49; these read TLTC and TCGC. Thr52 is subject to 2,3-didehydrobutyrine; by the dehydratase ElxB.

It belongs to the type A lantibiotic family. In terms of processing, maturation of this lantibiotic involves the enzymatic conversion of Thr, and Ser into dehydrated AA by ElxB and the formation of thioether bonds with cysteine by the cyclase ElxC. The next steps are cleavage of the leader peptide by ElxP and membrane translocation by ElxT. The leader peptide may be removed before membrane translocation, in contrast to other lantibiotics for which the cleavage occur after translocation. This is suggested by the probable cytoplasmic localization of the serine protease ElxP that cleaves the leader peptide. Post-translationally, it is not established whether the 2,3-didehydrobutyrine is the E- or Z-isomer. The N-terminal D-lactate is probably produced by dehydration of Ser-25 by ElxB, followed by proteolytic removal of the leader peptide by the serine protease ElxP and hydrolysis of the resulting new N-terminal dehydroalanine. This hydrolysis may occur spontaneously. The pyruvate group thus formed is reduced to D-lactate by the NADPH-dependent oxidoreductase ElxO. This N-terminal D-lactate protects the lantibiotic against degradation against aminopeptidase.

In terms of biological role, lanthionine-containing peptide antibiotic (lantibiotic) active on Gram-positive bacteria such as staphylococci, enterococci and streptococci. The bactericidal activity of lantibiotics is based on depolarization of energized bacterial cytoplasmic membranes, initiated by the formation of aqueous transmembrane pores. The sequence is that of Lantibiotic epilancin (elkA) from Staphylococcus epidermidis.